Reading from the N-terminus, the 315-residue chain is Protein SHORT INTERNODES 1 (315 aa).

The segment covering 1–10 (MAGFPLGGGS) has biased composition (gly residues). 2 disordered regions span residues 1–24 (MAGFPLGGGSHSRDNPAPPVPPVH) and 64–92 (PPAPSLAGASSSSSSRGMRSSGGGGGGGG). Positions 70–82 (AGASSSSSSRGMR) are enriched in low complexity. Residues 83–92 (SSGGGGGGGG) show a composition bias toward gly residues. Residues Cys-97, Cys-100, Cys-108, Cys-113, Cys-117, and Cys-124 each coordinate Zn(2+). Positions 97-124 (CQDCGNQAKKDCTHMRCRTCCKSRGFAC) form a DNA-binding region, zn(2)-C6 fungal-type; degenerate. 2 stretches are compositionally biased toward low complexity: residues 143–156 (QQLAALAASAAATA) and 172–182 (RPSATTPTTSS). The segment at 143–186 (QQLAALAASAAATAGGAGPSRDPTKRPRARPSATTPTTSSGDQQ) is disordered. The short motif at 227 to 230 (IGGH) is the Required for homo- and heterodimerization element.

The protein belongs to the SHI protein family. Forms homodimers (via C-terminus). Interacts with SPL14/IPA1 (via C-terminus). Predominantly expressed in axillary buds and young panicles.

Its subcellular location is the nucleus. In terms of biological role, regulates tillering and panicle branching by modulating SPL14/IPA1 transcriptional activity on the downstream TB1 and DEP1 target genes. Binds directly to the 5'-T/GCTCTAC-3' DNA motif found in the promoter regions of both TB1 and DEP1. Represses the DNA binding activity of SPL14/IPA1 toward the promoters of both TB1 and DEP1. Exhibits weak transcriptional activation activity in yeast cells. The chain is Protein SHORT INTERNODES 1 from Oryza sativa subsp. japonica (Rice).